The primary structure comprises 259 residues: Thiazole synthase (259 aa).

K100 acts as the Schiff-base intermediate with DXP in catalysis. 1-deoxy-D-xylulose 5-phosphate-binding positions include G161, 187–188 (AG), and 209–210 (AS).

Belongs to the ThiG family. As to quaternary structure, homotetramer. Forms heterodimers with either ThiH or ThiS.

It is found in the cytoplasm. It carries out the reaction [ThiS sulfur-carrier protein]-C-terminal-Gly-aminoethanethioate + 2-iminoacetate + 1-deoxy-D-xylulose 5-phosphate = [ThiS sulfur-carrier protein]-C-terminal Gly-Gly + 2-[(2R,5Z)-2-carboxy-4-methylthiazol-5(2H)-ylidene]ethyl phosphate + 2 H2O + H(+). It participates in cofactor biosynthesis; thiamine diphosphate biosynthesis. Its function is as follows. Catalyzes the rearrangement of 1-deoxy-D-xylulose 5-phosphate (DXP) to produce the thiazole phosphate moiety of thiamine. Sulfur is provided by the thiocarboxylate moiety of the carrier protein ThiS. In vitro, sulfur can be provided by H(2)S. This is Thiazole synthase from Salinispora arenicola (strain CNS-205).